Here is a 567-residue protein sequence, read N- to C-terminus: Cytochrome P450 monooxygenase 79 (567 aa).

A helical transmembrane segment spans residues 7–24 (ELAILAIVLLVTAVVFYT). N-linked (GlcNAc...) asparagine glycosylation is found at asparagine 223 and asparagine 279. Cysteine 475 provides a ligand contact to heme.

It belongs to the cytochrome P450 family. Heme serves as cofactor.

It localises to the membrane. The protein operates within secondary metabolite biosynthesis. In terms of biological role, cytochrome P450 monooxygenase that is able to use dehydroabietic acid as a substrate for oxidation. This chain is Cytochrome P450 monooxygenase 79, found in Postia placenta (strain ATCC 44394 / Madison 698-R) (Brown rot fungus).